The primary structure comprises 144 residues: Large ribosomal subunit protein uL16 (144 aa).

Basic residues predominate over residues 1-16 (MLVPKRVKHRKVQRGH). A disordered region spans residues 1–20 (MLVPKRVKHRKVQRGHMRGE).

Belongs to the universal ribosomal protein uL16 family. Part of the 50S ribosomal subunit.

Binds 23S rRNA and is also seen to make contacts with the A and possibly P site tRNAs. The sequence is that of Large ribosomal subunit protein uL16 from Limosilactobacillus reuteri (strain DSM 20016) (Lactobacillus reuteri).